The primary structure comprises 130 residues: Small ribosomal subunit protein uS9 (130 aa).

Residues 111–130 (VERKKVGLRKARRRPQFSKR) are disordered. The span at 116-130 (VGLRKARRRPQFSKR) shows a compositional bias: basic residues.

This sequence belongs to the universal ribosomal protein uS9 family.

The chain is Small ribosomal subunit protein uS9 from Enterobacter sp. (strain 638).